The chain runs to 3856 residues: Hybrid PKS-NRPS synthetase traA (3856 aa).

Positions 6 to 438 (PEPIAIVGSG…GTNGHAILEE (433 aa)) constitute a Ketosynthase family 3 (KS3) domain. Residues C179, H318, and H358 each act as for beta-ketoacyl synthase activity in the active site. Residues 554–885 (IFTGQGAQWA…FSDALGFVWT (332 aa)) are malonyl-CoA:ACP transacylase (MAT) domain. The segment at 943-1081 (HELLGVPSPN…GKVTVIYGTP (139 aa)) is N-terminal hotdog fold. Positions 943 to 1247 (HELLGVPSPN…LSMKPFSPAT (305 aa)) are dehydratase (DH) domain. Positions 943 to 1249 (HELLGVPSPN…MKPFSPATAD (307 aa)) constitute a PKS/mFAS DH domain. Catalysis depends on H975, which acts as the Proton acceptor; for dehydratase activity. A C-terminal hotdog fold region spans residues 1096–1249 (MVDIQAEQFY…MKPFSPATAD (154 aa)). D1156 serves as the catalytic Proton donor; for dehydratase activity. The methyltransferase (MT) domain stretch occupies residues 1290 to 1456 (LACVAQQIVH…RKAGFSGIDS (167 aa)). Residues 1984–2158 (TYVLVGLSGR…ATSLDIGSIV (175 aa)) are ketoreductase (KR) domain. One can recognise a Carrier 1 domain in the interval 2266-2347 (ADALEILKEL…TLCQQALEKL (82 aa)). S2307 carries the O-(pantetheine 4'-phosphoryl)serine modification. A disordered region spans residues 2351 to 2422 (ILPNVESGGP…SSTPATVLSN (72 aa)). Composition is skewed to low complexity over residues 2357-2369 (SGGP…SKPT) and 2399-2418 (TTSP…TPAT). A condensation (C) domain region spans residues 2446 to 2884 (VKTELVSFQQ…FALFSDKELK (439 aa)). Residues 2910–3310 (QIAKENDDKV…GAMVFHNRIA (401 aa)) form an adenylation (A) domain region. Positions 3403–3429 (SKTDRKALKELPLPQRSNHDTGDNTES) are disordered. The 80-residue stretch at 3428–3507 (ESLTETMLEL…DMTQKIEESL (80 aa)) folds into the Carrier 2 domain. Residue S3467 is modified to O-(pantetheine 4'-phosphoryl)serine. The interval 3544-3768 (VTGSGGFLGK…EMTPIHSAAS (225 aa)) is reductase (R) domain.

This sequence in the C-terminal section; belongs to the NRP synthetase family.

It participates in secondary metabolite biosynthesis. Functionally, hybrid PKS-NRPS synthetase; part of the tra gene cluster that produces terrestric acid. The clavatol biosynthesis cluster cla and the terrestric acid cluster tra are both involved in the production of peniphenones and penilactones. The non-reducing PKS claF is responsible for the formation of clavatol from successive condensations of 3 malonyl-CoA units, presumably with a simple acetyl-CoA starter unit, and 2 methylation steps. The esterase claE probably collaborates with claF by catalyzing the hydrolysis of ACP-bound acyl intermediates to free the ACP from stalled intermediates. The clavatol oxidase claD then converts clavatol to hydroxyclavatol. Spontaneous dehydration of hydroxyclavatol leads to the accumulation of the highly active ortho-quinone methide. On the other hand, the PKS-NRPS hybrid traA is involved in the formation of crustosic acid, with the help of traB and traD. The polyketide synthase module (PKS) of traA is responsible for the synthesis of the polyketide backbone via the condensation of an acetyl-CoA starter unit with 3 malonyl-CoA units. The downstream nonribosomal peptide synthetase (NRPS) module then amidates the carboxyl end of the polyketide with L-malic acid. Because traA lacks a designated enoylreductase (ER) domain, the required activity is provided the enoyl reductase traG. Crustosic acid undergoes decarboxylation and isomerization to the terrestric acid, catalyzed by the 2-oxoglutarate-dependent dioxygenase traH. Both acids are further converted to the 2 gamma-butyrolactones (R)-5-methyltetronic acid and (S)-5-carboxylmethyltetronic acid, with involvement of the cytochrome P450 monooxygenase claJ. Spontaneous addition of the methide to these gamma-butyrolactones leads to peniphenone D and penilactone D, which undergo again stereospecific attacking by methide to give penilactones A and B. This chain is Hybrid PKS-NRPS synthetase traA, found in Penicillium crustosum (Blue mold fungus).